Consider the following 306-residue polypeptide: Transcription initiation factor IIB 2 (306 aa).

The TFIIB-type zinc-finger motif lies at 6–37; it reads PKRVCPICGSTEFIYDPRRGEIVCAKCGYVIE. Zn(2+) is bound by residues Cys-10, Cys-13, Cys-29, and Cys-32. Repeat copies occupy residues 123–206 and 217–298.

The protein belongs to the TFIIB family.

Its function is as follows. Stabilizes TBP binding to an archaeal box-A promoter. Also responsible for recruiting RNA polymerase II to the pre-initiation complex (DNA-TBP-TFIIB). In Thermococcus kodakarensis (strain ATCC BAA-918 / JCM 12380 / KOD1) (Pyrococcus kodakaraensis (strain KOD1)), this protein is Transcription initiation factor IIB 2.